Consider the following 192-residue polypeptide: GTP cyclohydrolase-2 (192 aa).

50 to 54 (RLHSE) serves as a coordination point for GTP. Cysteine 55, cysteine 66, and cysteine 68 together coordinate Zn(2+). GTP-binding positions include 92–94 (EGR) and threonine 114. Aspartate 126 serves as the catalytic Proton acceptor. Arginine 128 acts as the Nucleophile in catalysis. The GTP site is built by threonine 149 and lysine 154.

The protein belongs to the GTP cyclohydrolase II family. The cofactor is Zn(2+).

The catalysed reaction is GTP + 4 H2O = 2,5-diamino-6-hydroxy-4-(5-phosphoribosylamino)-pyrimidine + formate + 2 phosphate + 3 H(+). It participates in cofactor biosynthesis; riboflavin biosynthesis; 5-amino-6-(D-ribitylamino)uracil from GTP: step 1/4. Functionally, catalyzes the conversion of GTP to 2,5-diamino-6-ribosylamino-4(3H)-pyrimidinone 5'-phosphate (DARP), formate and pyrophosphate. The polypeptide is GTP cyclohydrolase-2 (Helicobacter pylori (strain P12)).